The sequence spans 449 residues: Exopolygalacturonase X-2 (449 aa).

The signal sequence occupies residues 1–24 (MGFKRTIGLLLGILLALDQVSVLA). Asn-136, Asn-172, and Asn-208 each carry an N-linked (GlcNAc...) asparagine glycan. A PbH1 1 repeat occupies 240–261 (SDNVVIQNSVINHDDDCVSFKP). The active-site Proton donor is the Asp-254. Cys-256 and Cys-273 are oxidised to a cystine. 2 N-linked (GlcNAc...) asparagine glycosylation sites follow: Asn-262 and Asn-274. PbH1 repeat units follow at residues 263 to 283 (STNI…SVGS) and 294 to 315 (VSDL…RLKV). His-277 is an active-site residue. Residues Asn-301, Asn-306, Asn-340, and Asn-365 are each glycosylated (N-linked (GlcNAc...) asparagine). A disulfide bridge connects residues Cys-403 and Cys-409. N-linked (GlcNAc...) asparagine glycosylation is found at Asn-416 and Asn-421.

The protein belongs to the glycosyl hydrolase 28 family.

It localises to the secreted. The enzyme catalyses [(1-&gt;4)-alpha-D-galacturonosyl](n) + H2O = alpha-D-galacturonate + [(1-&gt;4)-alpha-D-galacturonosyl](n-1). Functionally, specific in hydrolyzing the terminal glycosidic bond of polygalacturonic acid and oligogalacturonates. The sequence is that of Exopolygalacturonase X-2 (pgaX-2) from Emericella nidulans (strain FGSC A4 / ATCC 38163 / CBS 112.46 / NRRL 194 / M139) (Aspergillus nidulans).